Reading from the N-terminus, the 449-residue chain is tRNA-2-methylthio-N(6)-dimethylallyladenosine synthase (449 aa).

The 116-residue stretch at 4 to 119 (RTFHIETFGC…APQALDRLVE (116 aa)) folds into the MTTase N-terminal domain. [4Fe-4S] cluster contacts are provided by cysteine 13, cysteine 48, cysteine 82, cysteine 158, cysteine 162, and cysteine 165. Residues 144–375 (GAVPASVFVN…QTLQNRLTER (232 aa)) form the Radical SAM core domain. Residues 378–446 (QDMVGRKVEV…KHSLLAEQAG (69 aa)) enclose the TRAM domain.

It belongs to the methylthiotransferase family. MiaB subfamily. As to quaternary structure, monomer. Requires [4Fe-4S] cluster as cofactor.

The protein resides in the cytoplasm. The catalysed reaction is N(6)-dimethylallyladenosine(37) in tRNA + (sulfur carrier)-SH + AH2 + 2 S-adenosyl-L-methionine = 2-methylsulfanyl-N(6)-dimethylallyladenosine(37) in tRNA + (sulfur carrier)-H + 5'-deoxyadenosine + L-methionine + A + S-adenosyl-L-homocysteine + 2 H(+). Its function is as follows. Catalyzes the methylthiolation of N6-(dimethylallyl)adenosine (i(6)A), leading to the formation of 2-methylthio-N6-(dimethylallyl)adenosine (ms(2)i(6)A) at position 37 in tRNAs that read codons beginning with uridine. In Nitratidesulfovibrio vulgaris (strain ATCC 29579 / DSM 644 / CCUG 34227 / NCIMB 8303 / VKM B-1760 / Hildenborough) (Desulfovibrio vulgaris), this protein is tRNA-2-methylthio-N(6)-dimethylallyladenosine synthase.